Here is a 302-residue protein sequence, read N- to C-terminus: Bifunctional ligase/repressor BirA (302 aa).

The segment at residues 14–33 is a DNA-binding region (H-T-H motif); the sequence is QPKVRSELEKFSKNLEEDIQ. Residues 62–236 enclose the BPL/LPL catalytic domain; it reads QISTALFPYS…HLYTRLNIFE (175 aa). Biotin contacts are provided by residues 80–82, glutamine 103, 107–109, and lysine 167; these read STN and RGR.

This sequence belongs to the biotin--protein ligase family.

The enzyme catalyses biotin + L-lysyl-[protein] + ATP = N(6)-biotinyl-L-lysyl-[protein] + AMP + diphosphate + H(+). In terms of biological role, acts both as a biotin--[acetyl-CoA-carboxylase] ligase and a biotin-operon repressor. In the presence of ATP, BirA activates biotin to form the BirA-biotinyl-5'-adenylate (BirA-bio-5'-AMP or holoBirA) complex. HoloBirA can either transfer the biotinyl moiety to the biotin carboxyl carrier protein (BCCP) subunit of acetyl-CoA carboxylase, or bind to the biotin operator site and inhibit transcription of the operon. In Haemophilus influenzae (strain ATCC 51907 / DSM 11121 / KW20 / Rd), this protein is Bifunctional ligase/repressor BirA.